Here is a 499-residue protein sequence, read N- to C-terminus: Probable cytosol aminopeptidase (499 aa).

Residues Lys-264 and Asp-269 each contribute to the Mn(2+) site. Residue Lys-276 is part of the active site. Asp-287, Asp-346, and Glu-348 together coordinate Mn(2+). Arg-350 is an active-site residue.

Belongs to the peptidase M17 family. It depends on Mn(2+) as a cofactor.

The protein localises to the cytoplasm. It catalyses the reaction Release of an N-terminal amino acid, Xaa-|-Yaa-, in which Xaa is preferably Leu, but may be other amino acids including Pro although not Arg or Lys, and Yaa may be Pro. Amino acid amides and methyl esters are also readily hydrolyzed, but rates on arylamides are exceedingly low.. The enzyme catalyses Release of an N-terminal amino acid, preferentially leucine, but not glutamic or aspartic acids.. Its function is as follows. Presumably involved in the processing and regular turnover of intracellular proteins. Catalyzes the removal of unsubstituted N-terminal amino acids from various peptides. This chain is Probable cytosol aminopeptidase, found in Rhodopseudomonas palustris (strain BisB18).